The chain runs to 201 residues: MDVLVPFAAREPKTRLAGTLDADERAAFARAMLLDVCDAVEAAGGEPTVLATEPLAIEQPVVVDKRPLTPAIDAHLSPPAAVVMADVALVTPAALRRLFATTGDVVIAPGLGGGTNALVVRADGFTVDYHGTSVRDHRRAAEGAGIDARSVDSFRLAVDIDEPTDLAEVLLHGDGRSADWLKNAGFRLAETDGRTTVERRG.

Belongs to the CofC family. Homodimer.

It carries out the reaction (2S)-2-phospholactate + GTP + H(+) = (2S)-lactyl-2-diphospho-5'-guanosine + diphosphate. It participates in cofactor biosynthesis; coenzyme F420 biosynthesis. Guanylyltransferase that catalyzes the activation of (2S)-2-phospholactate (2-PL) as (2S)-lactyl-2-diphospho-5'-guanosine, via the condensation of 2-PL with GTP. It is involved in the biosynthesis of coenzyme F420, a hydride carrier cofactor. The polypeptide is 2-phospho-L-lactate guanylyltransferase (Natronomonas pharaonis (strain ATCC 35678 / DSM 2160 / CIP 103997 / JCM 8858 / NBRC 14720 / NCIMB 2260 / Gabara) (Halobacterium pharaonis)).